The primary structure comprises 240 residues: 2,3,4,5-tetrahydropyridine-2,6-dicarboxylate N-acetyltransferase (240 aa).

The protein belongs to the transferase hexapeptide repeat family. DapH subfamily.

It catalyses the reaction (S)-2,3,4,5-tetrahydrodipicolinate + acetyl-CoA + H2O = L-2-acetamido-6-oxoheptanedioate + CoA. It functions in the pathway amino-acid biosynthesis; L-lysine biosynthesis via DAP pathway; LL-2,6-diaminopimelate from (S)-tetrahydrodipicolinate (acetylase route): step 1/3. Its function is as follows. Catalyzes the transfer of an acetyl group from acetyl-CoA to tetrahydrodipicolinate. This Halalkalibacterium halodurans (strain ATCC BAA-125 / DSM 18197 / FERM 7344 / JCM 9153 / C-125) (Bacillus halodurans) protein is 2,3,4,5-tetrahydropyridine-2,6-dicarboxylate N-acetyltransferase.